Here is a 228-residue protein sequence, read N- to C-terminus: Latherin (228 aa).

An N-terminal signal peptide occupies residues 1–20; that stretch reads MLKVSCLFVLLCGLLVPSSA. An intrachain disulfide couples cysteine 153 to cysteine 196.

It belongs to the BPI/LBP/Plunc superfamily. Plunc family. As to quaternary structure, monomer. Post-translationally, no sign of N-X-[ST] acceptor site even though reported as N-glycosylated. In terms of tissue distribution, found in sweat (at protein level).

It is found in the secreted. Major protein in sweat, has surfactant properties. Has a role in temperature regulation by having a capacity to make hydrophobic surfaces wettable and so can function in promoting spreading and evaporation of sweat. The protein is Latherin (LATH) of Equus caballus (Horse).